The sequence spans 140 residues: Histone H2B (140 aa).

Residues 1-10 show a composition bias toward basic and acidic residues; sequence MPPKAAEKKP. The segment at 1–48 is disordered; the sequence is MPPKAAEKKPSTGGKAPAGKAPAEKKEAGKKTAAAASGEKKKRGKTRK. 2 positions are modified to N6-acetyllysine; alternate: Lys-8 and Lys-9. Residues Lys-8 and Lys-9 each participate in a glycyl lysine isopeptide (Lys-Gly) (interchain with G-Cter in SUMO); alternate cross-link. Residues 11–21 are compositionally biased toward low complexity; the sequence is STGGKAPAGKA. N6-acetyllysine is present on Lys-15. An N6-acetyllysine; alternate modification is found at Lys-25. Lys-25 is covalently cross-linked (Glycyl lysine isopeptide (Lys-Gly) (interchain with G-Cter in SUMO); alternate). Lys-26 is covalently cross-linked (Glycyl lysine isopeptide (Lys-Gly) (interchain with G-Cter in SUMO)). Lys-134 is covalently cross-linked (Glycyl lysine isopeptide (Lys-Gly) (interchain with G-Cter in ubiquitin)).

The protein belongs to the histone H2B family. As to quaternary structure, the nucleosome is a histone octamer containing two molecules each of H2A, H2B, H3 and H4 assembled in one H3-H4 heterotetramer and two H2A-H2B heterodimers. The octamer wraps approximately 147 bp of DNA. Monoubiquitinated by the ubc2-bre1 complex to form H2BK123ub1. H2BK123ub1 gives a specific tag for epigenetic transcriptional activation and is also prerequisite for H3K4me and H3K79me formation. H2BK123ub1 also modulates the formation of double-strand breaks during meiosis and is a prerequisite for DNA-damage checkpoint activation. Post-translationally, acetylated by gcn5 to form H2BK11ac and H2BK16ac. H2BK16ac can also be formed by esa1. Acetylation of N-terminal lysines and particularly formation of H2BK11acK16ac has a positive effect on transcription. In terms of processing, sumoylation to form H2BK6su or H2BK7su, and probably also H2BK16su or H2BK17su, occurs preferentially near the telomeres and represses gene transcription.

The protein resides in the nucleus. The protein localises to the chromosome. Functionally, core component of nucleosome. Nucleosomes wrap and compact DNA into chromatin, limiting DNA accessibility to the cellular machineries which require DNA as a template. Histones thereby play a central role in transcription regulation, DNA repair, DNA replication and chromosomal stability. DNA accessibility is regulated via a complex set of post-translational modifications of histones, also called histone code, and nucleosome remodeling. This chain is Histone H2B (htbA), found in Emericella nidulans (strain FGSC A4 / ATCC 38163 / CBS 112.46 / NRRL 194 / M139) (Aspergillus nidulans).